The primary structure comprises 346 residues: DnaJ protein ERDJ3B (346 aa).

Residues 1–23 form the signal peptide; that stretch reads MAIRWSELCIVLFALSYAICVLA. In terms of domain architecture, J spans 26 to 91; it reads SYYDVLQVPK…EKREIYNKYG (66 aa). A glycan (N-linked (GlcNAc...) asparagine) is linked at Asn267.

As to quaternary structure, interacts with SDF2 and MED37A/BIP1. Post-translationally, N-glycosylated. In terms of tissue distribution, expressed in leaves, flower buds and flowers.

It is found in the endoplasmic reticulum lumen. Functionally, regulates protein folding in the endoplasmic reticulum (ER) lumen. Forms a complex in the ER with SDF2 and MED37A/BIP1 which is required for the proper accumulation and function of the surface-exposed leucine-rich repeat receptor kinases EFR involved in pathogen-associated molecular pattern (PAMP) triggered immunity. The sequence is that of DnaJ protein ERDJ3B (ERDJ3B) from Arabidopsis thaliana (Mouse-ear cress).